Reading from the N-terminus, the 480-residue chain is Oxysterol-binding protein-related protein 2 (480 aa).

A disordered region spans residues 1–60; the sequence is MNGEEEFFDAVTGFDSDNSSGEFSEANQKVTGMIDLDTSKNNRIGKTGERPSQENGIQKH. Polar residues predominate over residues 15–30; sequence DSDNSSGEFSEANQKV. Ser19 and Ser20 each carry phosphoserine. A 1,2-diacyl-sn-glycero-3-phospho-(1D-myo-inositol-4,5-bisphosphate) contacts are provided by residues Lys90, 178 to 179, and 427 to 431; these read HH and EEKQR.

The protein belongs to the OSBP family. In terms of assembly, monomer. Homotetramer; phosphatidylinositol-4,5-bisphosphate binding promotes formation of stable tetramers. Interacts with DIAPH1. In terms of tissue distribution, widely expressed.

It localises to the cytoplasm. The protein resides in the cytosol. Its subcellular location is the lipid droplet. The protein localises to the cell membrane. Its function is as follows. Intracellular transport protein that binds sterols and phospholipids and mediates lipid transport between intracellular compartments. Increases plasma membrane cholesterol levels and decreases phosphatidylinositol-4,5-bisphosphate levels in the cell membrane. Binds phosphoinositides, such as phosphatidylinositol-4,5-bisphosphate. Exhibits strong binding to phosphatidic acid and weak binding to phosphatidylinositol 3-phosphate. Binds cholesterol, dehydroergosterol, 22(R)-hydroxycholesterol and 25-hydroxycholesterol (in vitro). This is Oxysterol-binding protein-related protein 2 (OSBPL2) from Homo sapiens (Human).